The sequence spans 213 residues: uncharacterized protein (213 aa).

Coiled coils occupy residues Lys-54–Leu-78 and Val-108–Lys-151. Over residues Ile-122–Lys-142 the composition is skewed to basic and acidic residues. Residues Ile-122–Trp-213 form a disordered region. Low complexity predominate over residues Lys-146–Ser-188. Basic residues predominate over residues Lys-189 to Asn-199.

This sequence belongs to the mimivirus R546 family.

This is an uncharacterized protein from Acanthamoeba polyphaga (Amoeba).